The primary structure comprises 402 residues: Imidazolonepropionase (402 aa).

Fe(3+) is bound by residues His66 and His68. Residues His66 and His68 each contribute to the Zn(2+) site. Arg75, Tyr138, and His171 together coordinate 4-imidazolone-5-propanoate. Tyr138 provides a ligand contact to N-formimidoyl-L-glutamate. Position 236 (His236) interacts with Fe(3+). His236 contributes to the Zn(2+) binding site. Gln239 contributes to the 4-imidazolone-5-propanoate binding site. A Fe(3+)-binding site is contributed by Asp311. Position 311 (Asp311) interacts with Zn(2+). Residues Asn313 and Gly315 each contribute to the N-formimidoyl-L-glutamate site. Position 316 (Thr316) interacts with 4-imidazolone-5-propanoate.

This sequence belongs to the metallo-dependent hydrolases superfamily. HutI family. Zn(2+) serves as cofactor. The cofactor is Fe(3+).

It is found in the cytoplasm. It catalyses the reaction 4-imidazolone-5-propanoate + H2O = N-formimidoyl-L-glutamate. It participates in amino-acid degradation; L-histidine degradation into L-glutamate; N-formimidoyl-L-glutamate from L-histidine: step 3/3. Catalyzes the hydrolytic cleavage of the carbon-nitrogen bond in imidazolone-5-propanoate to yield N-formimidoyl-L-glutamate. It is the third step in the universal histidine degradation pathway. The protein is Imidazolonepropionase of Pseudomonas paraeruginosa (strain DSM 24068 / PA7) (Pseudomonas aeruginosa (strain PA7)).